A 1106-amino-acid polypeptide reads, in one-letter code: Probable ATP-citrate synthase (1106 aa).

The citrate site is built by Asn358, Thr360, and Arg391. A compositionally biased stretch (polar residues) spans 442–459; that stretch reads APQTTGQFLLSPERNTGG. The segment at 442-478 is disordered; sequence APQTTGQFLLSPERNTGGTERAPPSPAANATPTEHPL. ATP-binding positions include 701-721 and 752-778; these read VIRYQNDDRVKMIVLLGEVGG and ITSEVQFGHAGASANALGETAACKNAA. A Mg(2+)-binding site is contributed by Glu718. His760 serves as the catalytic Tele-phosphohistidine intermediate. 779–789 contributes to the CoA binding site; the sequence is LRASGALVPES.

The protein in the N-terminal section; belongs to the succinate/malate CoA ligase beta subunit family. It in the C-terminal section; belongs to the succinate/malate CoA ligase alpha subunit family. As to quaternary structure, homotetramer.

The protein resides in the cytoplasm. The enzyme catalyses oxaloacetate + acetyl-CoA + ADP + phosphate = citrate + ATP + CoA. Catalyzes the cleavage of citrate into oxaloacetate and acetyl-CoA, the latter serving as common substrate in multiple biochemical reactions in protein, carbohydrate and lipid metabolism. The chain is Probable ATP-citrate synthase from Caenorhabditis elegans.